The sequence spans 100 residues: Putative protein BCL8 (100 aa).

As to expression, expressed in prostate and testis.

The polypeptide is Putative protein BCL8 (NBEAP1) (Homo sapiens (Human)).